The sequence spans 669 residues: UvrABC system protein B (669 aa).

In terms of domain architecture, Helicase ATP-binding spans 26–183; it reads TNFHAGIAKQ…RHLTELQYTR (158 aa). Residue 39–46 participates in ATP binding; sequence GVTGSGKT. Residues 92–115 carry the Beta-hairpin motif; the sequence is YYDYYQPEAYVPASDTFIEKDSSI. Positions 431 to 597 constitute a Helicase C-terminal domain; it reads QVDDLISQIN…SVVRPISDIL (167 aa). In terms of domain architecture, UVR spans 631–666; sequence AAQMKVLEQKMYQHARDLEFEDAARIRDQIQRLREA.

Belongs to the UvrB family. Forms a heterotetramer with UvrA during the search for lesions. Interacts with UvrC in an incision complex.

It is found in the cytoplasm. Functionally, the UvrABC repair system catalyzes the recognition and processing of DNA lesions. A damage recognition complex composed of 2 UvrA and 2 UvrB subunits scans DNA for abnormalities. Upon binding of the UvrA(2)B(2) complex to a putative damaged site, the DNA wraps around one UvrB monomer. DNA wrap is dependent on ATP binding by UvrB and probably causes local melting of the DNA helix, facilitating insertion of UvrB beta-hairpin between the DNA strands. Then UvrB probes one DNA strand for the presence of a lesion. If a lesion is found the UvrA subunits dissociate and the UvrB-DNA preincision complex is formed. This complex is subsequently bound by UvrC and the second UvrB is released. If no lesion is found, the DNA wraps around the other UvrB subunit that will check the other stand for damage. This is UvrABC system protein B from Xylella fastidiosa (strain M23).